The primary structure comprises 220 residues: Fructose-6-phosphate aldolase (220 aa).

Lys85 functions as the Schiff-base intermediate with substrate in the catalytic mechanism.

This sequence belongs to the transaldolase family. Type 3A subfamily. Homodecamer.

The protein localises to the cytoplasm. It catalyses the reaction beta-D-fructose 6-phosphate = dihydroxyacetone + D-glyceraldehyde 3-phosphate. Functionally, catalyzes the reversible formation of fructose 6-phosphate from dihydroxyacetone and D-glyceraldehyde 3-phosphate via an aldolization reaction. The chain is Fructose-6-phosphate aldolase from Salmonella agona (strain SL483).